The chain runs to 353 residues: Transcription termination/antitermination protein NusG (353 aa).

The KOW domain maps to 301–335 (VGDMVKIISGPFEDFAGVIKEIDPERQELKVNVTI).

The protein belongs to the NusG family.

With respect to regulation, regulated by autoinhibition via interaction of the N-terminal and the C-terminal domains. Autoinhibition may prevent NusG from interacting prematurely with other components of the transcription complex or non-specific interactions with other cellular components. In terms of biological role, participates in transcription elongation, termination and antitermination. The sequence is that of Transcription termination/antitermination protein NusG from Thermotoga maritima (strain ATCC 43589 / DSM 3109 / JCM 10099 / NBRC 100826 / MSB8).